The sequence spans 1507 residues: Histone-lysine N-methyltransferase set-2 (1507 aa).

Residues 1-32 are disordered; the sequence is MSTHDMNHHPPRKSHSKRDKPSSSNSGPKIEN. Residues 9-18 are compositionally biased toward basic residues; that stretch reads HPPRKSHSKR. Positions 128-199 constitute an RRM domain; that stretch reads VSLFNMDDNC…QNLLATKCTP (72 aa). Disordered stretches follow at residues 280–578, 650–697, 803–826, 842–1058, and 1163–1199; these read DYTM…QPQM, EPFS…EEPA, DEEK…SNHL, SSRG…GPII, and QKPR…FKPR. Residues 296 to 315 show a composition bias toward pro residues; the sequence is PIPPPPIKEESPPPPPPPPV. The span at 316-327 shows a compositional bias: low complexity; sequence ASVSNLAPVPSV. Residues 331–342 show a composition bias toward polar residues; the sequence is YYNNIQPSSSTM. Positions 413–444 are enriched in basic and acidic residues; that stretch reads VKYETYKMEKRKIKYEGGNKKYEQVHIKERTA. The segment covering 456-465 has biased composition (low complexity); that stretch reads SSESASGSSS. A compositionally biased stretch (basic residues) spans 478 to 488; sequence KKKKRPKSPNR. The span at 566–575 shows a compositional bias: polar residues; that stretch reads HLQTPYQHVQ. 2 stretches are compositionally biased toward basic and acidic residues: residues 668 to 680 and 803 to 823; these read DVGR…KPSL and DEEK…EKPS. Basic residues predominate over residues 846–868; that stretch reads FYRKQKPIPKSHPKHQEHHHHAK. Residues 869 to 908 are compositionally biased toward low complexity; the sequence is ASVSTPVHSSSTSRNSSVAPTPQRTVSTSSSSSSAATSAR. Positions 941–951 are enriched in polar residues; that stretch reads SFSSTSIQSSP. Over residues 958–971 the composition is skewed to low complexity; sequence SSSSRTSSSSSTSS. Residues 973–982 are compositionally biased toward basic and acidic residues; that stretch reads KQEETADEKS. A compositionally biased stretch (low complexity) spans 990 to 1007; the sequence is SSDESSTTGSTATSVVSS. The segment covering 1015-1047 has biased composition (basic and acidic residues); that stretch reads QQEKTDGEPPKKKSQTDFISERVSKIEGEERPL. Pro residues predominate over residues 1179 to 1190; that stretch reads EPPPTKRPAPPP. Residues 1340–1345 carry the RxxxRR motif motif; sequence RLLQRR. The 118-residue stretch at 1368–1485 folds into the SET domain; the sequence is KMIKFARSRI…KGEEITYDYK (118 aa). Tyr-1484 contributes to the S-adenosyl-L-methionine binding site. Residues 1491-1507 enclose the Post-SET domain; it reads DKIDCLCGAKTCRGYLN.

It belongs to the class V-like SAM-binding methyltransferase superfamily. As to quaternary structure, component of the Set1C/COMPASS complex (also known as the SET2 complex), which contains at least set-2, swd-2.1, cfp-1, rbbp-5, wdr-5.1, dpy-30 and ash-2. Expressed in all cells of embryo. In L1 larva, it is predominantly expressed in Z2 and Z3 primordial germ cells. In adults, it is predominantly expressed in the germline.

It localises to the nucleus. The catalysed reaction is L-lysyl(4)-[histone H3] + 3 S-adenosyl-L-methionine = N(6),N(6),N(6)-trimethyl-L-lysyl(4)-[histone H3] + 3 S-adenosyl-L-homocysteine + 3 H(+). It catalyses the reaction N(6)-methyl-L-lysyl(4)-[histone H3] + S-adenosyl-L-methionine = N(6),N(6)-dimethyl-L-lysyl(4)-[histone H3] + S-adenosyl-L-homocysteine + H(+). The enzyme catalyses N(6),N(6)-dimethyl-L-lysyl(4)-[histone H3] + S-adenosyl-L-methionine = N(6),N(6),N(6)-trimethyl-L-lysyl(4)-[histone H3] + S-adenosyl-L-homocysteine + H(+). In terms of biological role, catalytic component of the COMPASS (Set1C) complex that specifically mono-, di- and trimethylates histone H3 to form H3K4me1/2/3. Binds RNAs which might negatively affect its histone methyltransferase activity. COMPASS recognizes ubiquitinated H2B on one face of the nucleosome which stimulates the methylation of H3 on the opposing face. H3 'Lys-4' methylation represents a specific tag for epigenetic transcriptional activation. Implicated in the epigenetic inheritance of lifespan over several generations. Acts in the germline to limit the longevity of the soma, probably by regulating a lipid metabolism pathway that signals from the germline to the intestine, thereby preventing accumulation of mono-unsaturated fatty acids. Methylation in the germline is required for germline development and fertility, possibly by ensuring genome stability. May act redundantly with mes-3 and mes-4 proteins in the development of a fertile germline. Required for RNAi. Functions as an antagonist of hpl-1 and hpl-2 activity in growth and somatic gonad development. Cooperates with jmjd-3.1 and egl-27 to ensure robust transdifferentiation of the Y rectal cell to the PDA motor neuron during larval development. In Caenorhabditis elegans, this protein is Histone-lysine N-methyltransferase set-2 (set-2).